Reading from the N-terminus, the 1856-residue chain is Golgi-specific brefeldin A-resistance guanine nucleotide exchange factor 1 (1856 aa).

The DCB (dimerization and cyclophiln-binding); DCB:DCB domain and DCB:HUS domain interaction stretch occupies residues 1-211 (MVDKNIYIIQ…EPKSYVGTNM (211 aa)). The tract at residues 1–378 (MVDKNIYIIQ…SVHDMDYVNP (378 aa)) is interaction with RAB1B. Disordered regions lie at residues 215-256 (KMRA…NGAT) and 291-370 (DSGL…SASV). Basic residues predominate over residues 227–241 (WKKQKRSPRPPRHMT). The segment covering 316-328 (RESTTTESGSNEI) has biased composition (polar residues). A phosphoserine mark is found at Ser-349 and Ser-352. Thr-505 bears the Phosphothreonine mark. The HUS (homology upstream of Sec7); DCB:HUS domain interaction stretch occupies residues 528 to 548 (RIPSFVTELYINYDCDYYCAN). The segment at 601-626 (QEKKETSRPSYEAVDSTQEANSTERA) is disordered. A compositionally biased stretch (polar residues) spans 615-625 (DSTQEANSTER). In terms of domain architecture, SEC7 spans 690–880 (ELIEIKNKKK…EDMYHAIKNE (191 aa)). The interval 884–1370 (MPEEQTGLVR…LSRPSPSPLV (487 aa)) is phosphatidylinositol-phosphate binding; required for translocation to the leading edge and for ARF1 activation upon GPCR signaling. Positions 1284–1294 (TARADAPDAGA) are enriched in low complexity. A disordered region spans residues 1284–1333 (TARADAPDAGAQSDSELPSYHQNDVSLDRGYTSDSEVYTDHGRPGKIHRS). Positions 1295–1308 (QSDSELPSYHQNDV) are enriched in polar residues. Ser-1296 bears the Phosphoserine mark. Tyr-1314 carries the phosphotyrosine modification. Phosphoserine occurs at positions 1316, 1318, and 1333. Thr-1335 carries the phosphothreonine; by AMPK modification. Disordered stretches follow at residues 1430 to 1484 (CKSQ…EGVP), 1739 to 1806 (THLT…PPLI), and 1837 to 1856 (PVPL…SEVN). The span at 1432 to 1446 (SQDKRGKSHKYDSKG) shows a compositional bias: basic and acidic residues. A phosphoserine mark is found at Ser-1475 and Ser-1781. Low complexity predominate over residues 1775–1793 (SSSSPGSPVASSPSRLSPS).

As to quaternary structure, can form homodimers and probably homotetramers. Interacts with COPG1; the interaction is independent on ARF1 activation. Interacts with ARF1, ARF3, ARF4 and ARF5. Interacts with RAB1B (GTP-bound form); required for GBF1 membrane association. Interacts with GGA1, GGA2 and GGA3. Interacts with USO1. Interacts (via SEC7 domain) with PNPLA2 (via C-terminus); the interaction is direct. Can form homodimers and probably homotetramers. Interacts with COPG1; the interaction is independent on ARF1 activation. Interacts with ARF1, ARF3, ARF4 and ARF5. Interacts with RAB1B (GTP-bound form); required for GBF1 membrane association. Interacts with GGA1, GGA2 and GGA3. Interacts with USO1. Interacts (via SEC7 domain) with PNPLA2 (via C-terminus); the interaction is direct. Interacts with ARMH3.

The protein localises to the golgi apparatus. It localises to the cis-Golgi network. Its subcellular location is the endoplasmic reticulum-Golgi intermediate compartment. The protein resides in the trans-Golgi network. It is found in the cytoplasm. The protein localises to the lipid droplet. It localises to the membrane. Its activity is regulated as follows. Inhibited by brefeldin A (BFA). Inhibited by golgicide A (GCA). Its function is as follows. Guanine-nucleotide exchange factor (GEF) for members of the Arf family of small GTPases involved in trafficking in the early secretory pathway; its GEF activity initiates the coating of nascent vesicles via the localized generation of activated ARFs through replacement of GDP with GTP. Recruitment to cis-Golgi membranes requires membrane association of Arf-GDP and can be regulated by ARF1, ARF3, ARF4 and ARF5. Involved in the recruitment of the COPI coat complex to cellular membranes such as the endoplasmic reticulum exit sites (ERES), and the endoplasmic reticulum-Golgi intermediate (ERGIC) and cis-Golgi compartments implicating ARF1 activation. Involved in COPI vesicle-dependent retrograde transport from the ERGIC and cis-Golgi compartments to the endoplasmic reticulum (ER). Involved in the trans-Golgi network recruitment of GGA1, GGA2, GGA3, BIG1, BIG2, and the AP-1 adaptor protein complex related to chlathrin-dependent transport; the function requires its GEF activity (probably at least in part on ARF4 and ARF5). Has GEF activity towards ARF1. Has in vitro GEF activity towards ARF5. Involved in the processing of PSAP. Required for the assembly of the Golgi apparatus. The AMPK-phosphorylated form is involved in Golgi disassembly during mitotis and under stress conditions. May be involved in the COPI vesicle-dependent recruitment of PNPLA2 to lipid droplets. In neutrophils, involved in G protein-coupled receptor (GPCR)-mediated chemotaxis und superoxide production. Proposed to be recruited by phosphatidylinositol-phosphates generated upon GPCR stimulation to the leading edge where it recruits and activates ARF1, and is involved in recruitment of GIT2 and the NADPH oxidase complex. Plays a role in maintaining mitochondrial morphology. This chain is Golgi-specific brefeldin A-resistance guanine nucleotide exchange factor 1 (GBF1), found in Cricetulus griseus (Chinese hamster).